Reading from the N-terminus, the 304-residue chain is Probable casein kinase I homolog ECU03_0910 (304 aa).

One can recognise a Protein kinase domain in the interval 8-304; sequence IKLVQKIASG…SDSMGDLEIL (297 aa). Residues 14-22 and K37 contribute to the ATP site; that span reads IASGAFGDI. The active-site Proton acceptor is the D129.

It belongs to the protein kinase superfamily. CK1 Ser/Thr protein kinase family. Casein kinase I subfamily.

It localises to the nucleus. The catalysed reaction is L-seryl-[protein] + ATP = O-phospho-L-seryl-[protein] + ADP + H(+). It carries out the reaction L-threonyl-[protein] + ATP = O-phospho-L-threonyl-[protein] + ADP + H(+). Involved in DNA repair. May regulate the activity of protein(s) involved in double strand break repair caused by gamma rays. This Encephalitozoon cuniculi (strain GB-M1) (Microsporidian parasite) protein is Probable casein kinase I homolog ECU03_0910.